Consider the following 687-residue polypeptide: MAYEEKTDWLPDDPINEDDVNRWEKGIKDAHTDLAAHKNDMNNPHNTTKAQIGLGNVDNVQQASKTEFNEHNHDSTRHITSVERDEWNAKETPAGAQYKADQAEANAKAYTDNFAARRDNPNQVTKAQVGLGNVENVKQASLADFDAHLSNSKVHVSEGERNKWNAAQLIKLTGDDGKRIQLQDGTDILTLSSGFYCAVGQSVVNNPVEGDAAWYNYDIVEGGSGRKTIVAYQSWGSMMWIGMVHTDGEFRGWKQIATTDFIDRVQTELDLHENDKTNPHSVTKQQVGLGNVENVKQETPDGAQKKADTALNQSKDYTNSTAFITRPLNSITDANDLNLPPGTYRLDTNYMNANPVLQNQFPLNDNRTGLLIIYPSANKWATRQDWFSISTKTLYTRVAVNGTDYSGWYILENSEGSQNKADKALADAKNYVETNYTNQKLTVLTGSNAIQDARISGNDYKYGITFMDIGANNTTGYPLTYGFVKNEKHSNYRFTQYFYGNADTTSGSYDHVGTWIRHWWADSGWTAWQKISGFAHANIGTTGRQALIKGENNKIKYNRIIKDSHKLFDTKNNRFVASHAGMHLVSASLYIENTERYSNFELYVYVNGTKYKLMNQFRMPTPSNNSDNEFNATVTGSVTVPLDAGDYVEIYVYVGYSGDVTRYVTDSNGALNYFDVLELGGRNYPRV.

The protein to B.subtilis YqcC.

This is Phage-like element PBSX protein XkdV (xkdV) from Bacillus subtilis (strain 168).